A 1417-amino-acid polypeptide reads, in one-letter code: Cytoadherence-linked asexual protein 3.1 (1417 aa).

An N-terminal signal peptide occupies residues 1-24 (MVSFFKTPIFILIIFLYLNEKVIC). Intrachain disulfides connect C333/C361, C407/C413, C517/C545, and C521/C542. Residues 1204 to 1224 (LANGFMYAFCFFAISQMYAYF) traverse the membrane as a helical segment. A disordered region spans residues 1383–1417 (TYIDTEKMNEADSADSDDEKDSDTPDDELMISRFH). The span at 1394-1411 (DSADSDDEKDSDTPDDEL) shows a compositional bias: acidic residues.

As to quaternary structure, self-associates. Component of the RhopH complex. RhopH complex is at least composed of CLAG3.1/CLAG3.2, RhopH2 and RhopH3 with a 1:1:1 subunit stoichiometry. CLAG3.1/CLAG3.2 mediates subunit association through independent contacts with RhopH2 and RhopH3, which do not directly interact with one another. Interacts with RhopH2. Interacts with RhopH3.

The protein localises to the host cell membrane. It localises to the host cytoplasm. The protein resides in the cytoplasmic vesicle. It is found in the secretory vesicle. Its subcellular location is the rhoptry. Participates in the formation of new permeability pathways in Plasmodium-infected erythrocytes enabling the uptake of nutrients from the blood plasma. This chain is Cytoadherence-linked asexual protein 3.1, found in Plasmodium falciparum.